The chain runs to 199 residues: Outer-membrane lipoprotein LolB (199 aa).

The signal sequence occupies residues methionine 1–glycine 28. Cysteine 29 carries N-palmitoyl cysteine lipidation. Cysteine 29 carries S-diacylglycerol cysteine lipidation.

Belongs to the LolB family. As to quaternary structure, monomer.

It localises to the cell outer membrane. Its function is as follows. Plays a critical role in the incorporation of lipoproteins in the outer membrane after they are released by the LolA protein. The polypeptide is Outer-membrane lipoprotein LolB (Bordetella parapertussis (strain 12822 / ATCC BAA-587 / NCTC 13253)).